The sequence spans 187 residues: Adenine phosphoribosyltransferase (187 aa).

The protein belongs to the purine/pyrimidine phosphoribosyltransferase family. As to quaternary structure, homodimer.

The protein resides in the cytoplasm. It catalyses the reaction AMP + diphosphate = 5-phospho-alpha-D-ribose 1-diphosphate + adenine. It participates in purine metabolism; AMP biosynthesis via salvage pathway; AMP from adenine: step 1/1. Functionally, catalyzes a salvage reaction resulting in the formation of AMP, that is energically less costly than de novo synthesis. This chain is Adenine phosphoribosyltransferase, found in Yersinia pseudotuberculosis serotype I (strain IP32953).